The chain runs to 30 residues: Dermaseptin-S3 (30 aa).

This sequence belongs to the frog skin active peptide (FSAP) family. Dermaseptin subfamily. As to quaternary structure, monomer and oligomer. Forms aggregates in aqueous environments. As to expression, expressed by the skin glands.

It localises to the secreted. Its function is as follows. Potent antimicrobial peptide with activity against bacteria and protozoa. Also has activity against fungi. Probably acts by disturbing membrane functions with its amphipathic structure. Binds to healthy erythrocytes (this binding is receptor independent), but has very weak hemolytic activity. Does not bind to P.falciparum infected erythrocytes, but accumulates within the parasite. Kills the parasite, but has no hemolytic activity on the host cell. The chain is Dermaseptin-S3 from Phyllomedusa sauvagei (Sauvage's leaf frog).